Here is a 190-residue protein sequence, read N- to C-terminus: Shikimate kinase (190 aa).

ATP is bound at residue 13-18; sequence GAGKTT. Threonine 17 provides a ligand contact to Mg(2+). Residues aspartate 35, arginine 59, and glycine 81 each coordinate substrate. ATP is bound at residue arginine 119. Arginine 138 is a substrate binding site.

Belongs to the shikimate kinase family. As to quaternary structure, monomer. It depends on Mg(2+) as a cofactor.

The protein localises to the cytoplasm. The catalysed reaction is shikimate + ATP = 3-phosphoshikimate + ADP + H(+). It participates in metabolic intermediate biosynthesis; chorismate biosynthesis; chorismate from D-erythrose 4-phosphate and phosphoenolpyruvate: step 5/7. Catalyzes the specific phosphorylation of the 3-hydroxyl group of shikimic acid using ATP as a cosubstrate. The polypeptide is Shikimate kinase (Ralstonia nicotianae (strain ATCC BAA-1114 / GMI1000) (Ralstonia solanacearum)).